A 165-amino-acid polypeptide reads, in one-letter code: Iron sulfur cluster assembly protein 1, mitochondrial (165 aa).

Residues 1-27 (MLPVITRFARPALMAIRPVNAMGVLRA) constitute a mitochondrion transit peptide. The segment at 132-136 (LPPVK) is SSQ1 binding region.

It belongs to the NifU family. Homodimer, but can exist as monomers or trimers. Oligomerization may be regulated by Zn(2+) availability. Component of the core Fe-S cluster (ISC) assembly machinery. Interacts with YFH1/frataxin with a 1 to 1 stoichiometry; the interaction is direct. Interacts with the mitochondrial co-chaperones JAC1 and SSQ1. Interacts with NFS1. Interacts with YAH1/ferredoxin; interacts with the reduced form. Requires [2Fe-2S] cluster as cofactor. Zn(2+) serves as cofactor.

The protein localises to the mitochondrion matrix. Its pathway is cofactor biosynthesis; iron-sulfur cluster biosynthesis. Scaffold protein for the de novo synthesis of iron-sulfur (Fe-S) clusters within mitochondria, which is required for maturation of both mitochondrial and cytoplasmic [2Fe-2S] and [4Fe-4S] proteins. First, a [2Fe-2S] cluster is transiently assembled on the scaffold proteins ISU1 and ISU2. In a second step, the cluster is released from ISU1/ISU2, transferred to glutaredoxin GRX5, followed by the formation of mitochondrial [2Fe-2S] proteins, the synthesis of [4Fe-4S] clusters and their target-specific insertion into the recipient apoproteins. Cluster assembly on ISU1/ISU2 depends on the function of the cysteine desulfurase complex NFS1-ISD11, which serves as the sulfur donor for cluster synthesis, the iron-binding protein frataxin (YFH1) as the putative iron donor, and the electron transfer chain comprised of ferredoxin reductase ARH1 and ferredoxin YAH1, which receive their electrons from NADH. Fe-S cluster release from ISU1/ISU2 is achieved by interaction with the Hsp70 chaperone SSQ1, assisted by the DnaJ-like co-chaperone JAC1 and the nucleotide exchange factor MGE1. ISU1 is the major isoform in yeast, while ISU2 is not detectable in cells grown to stationary phase. Also involved in production of a sulfur precursor required for thiolation of cytoplasmic tRNAs. The polypeptide is Iron sulfur cluster assembly protein 1, mitochondrial (Saccharomyces cerevisiae (strain ATCC 204508 / S288c) (Baker's yeast)).